The sequence spans 588 residues: Putative pentatricopeptide repeat-containing protein At5g52630 (588 aa).

11 PPR repeats span residues 14 to 48 (NYNQICDLLLSSARTRSTIKGLQLHGYVVKSGLSL), 49 to 79 (IPLVANNLINFYSKSQLPFDSRRAFEDSPQK), 80 to 114 (SSTTWSSIISCFAQNELPWMSLEFLKKMMAGNLRP), 115 to 149 (DDHVLPSATKSCAILSRCDIGRSVHCLSMKTGYDA), 150 to 180 (DVFVGSSLVDMYAKCGEIVYARKMFDEMPQR), 181 to 215 (NVVTWSGMMYGYAQMGENEEALWLFKEALFENLAV), 216 to 250 (NDYSFSSVISVCANSTLLELGRQIHGLSIKSSFDS), 251 to 281 (SSFVGSSLVSLYSKCGVPEGAYQVFNEVPVK), 282 to 316 (NLGIWNAMLKAYAQHSHTQKVIELFKRMKLSGMKP), 317 to 351 (NFITFLNVLNACSHAGLVDEGRYYFDQMKESRIEP), and 352 to 386 (TDKHYASLVDMLGRAGRLQEALEVITNMPIDPTES). A type E motif region spans residues 387-462 (VWGALLTSCT…ETGLSWVEER (76 aa)). The segment at 463-493 (NKVHTFAAGERRHEKSKEIYEKLAELGEEME) is type E(+) motif. Positions 494–588 (KAGYIADTSY…DGKCSCNDYW (95 aa)) are type DYW motif.

The protein belongs to the PPR family. PCMP-H subfamily.

The sequence is that of Putative pentatricopeptide repeat-containing protein At5g52630 (PCMP-H52) from Arabidopsis thaliana (Mouse-ear cress).